The chain runs to 302 residues: Glycine N-acyltransferase-like protein 1 (302 aa).

It belongs to the glycine N-acyltransferase family. As to expression, expressed in liver and kidney and, at lower levels, in pancreas, testis, ovary and stomach.

The catalysed reaction is an acyl-CoA + L-glutamine = an N(2)-acyl-L-glutamine + CoA + H(+). In terms of biological role, acyltransferase which transfers an acyl group to the N-terminus of glutamine. Can use phenylacetyl-CoA as an acyl donor. The protein is Glycine N-acyltransferase-like protein 1 of Homo sapiens (Human).